The sequence spans 675 residues: PTS system glucose-specific EIICBA component (675 aa).

The PTS EIIC type-1 domain occupies 3 to 414 (KKFFGQLQRI…FNFKTPGRED (412 aa)). The next 11 membrane-spanning stretches (helical) occupy residues 16-36 (LMLP…GNAF), 63-83 (AGGI…AIGL), 89-109 (VAAI…GMFL), 126-146 (VLGI…GALA), 170-190 (FVPI…AIIW), 199-219 (AFSE…FGFI), 273-293 (FMQG…LAIY), 303-323 (VVAG…ITEP), 329-349 (LFVA…SFLI), 355-375 (LHLG…GILP), and 383-403 (VIPV…FLIV). The region spanning 425–506 (SELPFKVLDA…QQIMDGKITS (82 aa)) is the PTS EIIB type-1 domain. C447 (phosphocysteine intermediate; for EIIB activity) is an active-site residue. Positions 547 to 651 (DKVFSEKMMG…STITPIVVTN (105 aa)) constitute a PTS EIIA type-1 domain. Catalysis depends on H599, which acts as the Tele-phosphohistidine intermediate; for EIIA activity.

Its subcellular location is the cell membrane. The enzyme catalyses N(pros)-phospho-L-histidyl-[protein] + D-glucose(out) = D-glucose 6-phosphate(in) + L-histidyl-[protein]. With respect to regulation, inhibited by 2-deoxyglucose and methyl beta-D-glucoside, but not by methyl alpha-D-glucoside, p-nitrophenyl alpha-D-glucoside, o-nitrophenyl beta-D-glucoside and salicin. Functionally, the phosphoenolpyruvate-dependent sugar phosphotransferase system (sugar PTS), a major carbohydrate active transport system, catalyzes the phosphorylation of incoming sugar substrates concomitantly with their translocation across the cell membrane. This system is involved in glucose transport. Cannot transport galactose, fructose, mannose, cellobiose, sucrose, maltose, lactose, melibiose and trehalose, as well as N-acetylglucosamine. The chain is PTS system glucose-specific EIICBA component (ptsG) from Staphylococcus carnosus (strain TM300).